The primary structure comprises 334 residues: Putative transport protein MJ1177 (334 aa).

7 consecutive transmembrane segments (helical) span residues 13-33 (VIVG…DVLA), 61-81 (LAIS…LLTF), 138-158 (IIDV…TFYF), 191-211 (SYKN…ILSY), 234-254 (LLPI…FFLI), 259-279 (KAVF…DFVI), and 293-313 (VLVV…GFAI).

It belongs to the autoinducer-2 exporter (AI-2E) (TC 2.A.86) family.

Its subcellular location is the cell membrane. The sequence is that of Putative transport protein MJ1177 from Methanocaldococcus jannaschii (strain ATCC 43067 / DSM 2661 / JAL-1 / JCM 10045 / NBRC 100440) (Methanococcus jannaschii).